The chain runs to 325 residues: Ribosomal RNA small subunit methyltransferase H (325 aa).

Residues glycine 45–histidine 47, aspartate 65, tyrosine 92, aspartate 113, and glutamine 120 contribute to the S-adenosyl-L-methionine site.

Belongs to the methyltransferase superfamily. RsmH family.

Its subcellular location is the cytoplasm. It catalyses the reaction cytidine(1402) in 16S rRNA + S-adenosyl-L-methionine = N(4)-methylcytidine(1402) in 16S rRNA + S-adenosyl-L-homocysteine + H(+). Functionally, specifically methylates the N4 position of cytidine in position 1402 (C1402) of 16S rRNA. The polypeptide is Ribosomal RNA small subunit methyltransferase H (Oleidesulfovibrio alaskensis (strain ATCC BAA-1058 / DSM 17464 / G20) (Desulfovibrio alaskensis)).